Here is a 268-residue protein sequence, read N- to C-terminus: WUSCHEL-related homeobox 12 (268 aa).

A compositionally biased stretch (polar residues) spans 1–16; that stretch reads MNQEGASHSPSSTSTE. 2 disordered regions span residues 1-22 and 173-198; these read MNQE…RARW and SDHN…QNSN. The segment at residues 17–81 is a DNA-binding region (homeobox; WUS-type); it reads PVRARWSPKP…NRRSRSRRRH (65 aa).

The protein belongs to the WUS homeobox family.

The protein resides in the nucleus. Transcription factor which may be involved in developmental processes. The chain is WUSCHEL-related homeobox 12 (WOX12) from Arabidopsis thaliana (Mouse-ear cress).